The chain runs to 341 residues: tRNA N6-adenosine threonylcarbamoyltransferase (341 aa).

Positions 114 and 118 each coordinate Fe cation. Substrate-binding positions include 136–140 (LVSGG), D169, G182, D186, and N278. D304 is a Fe cation binding site.

The protein belongs to the KAE1 / TsaD family. Fe(2+) serves as cofactor.

It is found in the cytoplasm. The catalysed reaction is L-threonylcarbamoyladenylate + adenosine(37) in tRNA = N(6)-L-threonylcarbamoyladenosine(37) in tRNA + AMP + H(+). Its function is as follows. Required for the formation of a threonylcarbamoyl group on adenosine at position 37 (t(6)A37) in tRNAs that read codons beginning with adenine. Is involved in the transfer of the threonylcarbamoyl moiety of threonylcarbamoyl-AMP (TC-AMP) to the N6 group of A37, together with TsaE and TsaB. TsaD likely plays a direct catalytic role in this reaction. This chain is tRNA N6-adenosine threonylcarbamoyltransferase, found in Lactococcus lactis subsp. cremoris (strain MG1363).